The chain runs to 510 residues: Bifunctional purine biosynthesis protein PurH (510 aa).

An MGS-like domain is found at 1 to 145 (MSKRALISVS…KNFEDVLVVT (145 aa)).

Belongs to the PurH family.

The catalysed reaction is (6R)-10-formyltetrahydrofolate + 5-amino-1-(5-phospho-beta-D-ribosyl)imidazole-4-carboxamide = 5-formamido-1-(5-phospho-D-ribosyl)imidazole-4-carboxamide + (6S)-5,6,7,8-tetrahydrofolate. It catalyses the reaction IMP + H2O = 5-formamido-1-(5-phospho-D-ribosyl)imidazole-4-carboxamide. Its pathway is purine metabolism; IMP biosynthesis via de novo pathway; 5-formamido-1-(5-phospho-D-ribosyl)imidazole-4-carboxamide from 5-amino-1-(5-phospho-D-ribosyl)imidazole-4-carboxamide (10-formyl THF route): step 1/1. It functions in the pathway purine metabolism; IMP biosynthesis via de novo pathway; IMP from 5-formamido-1-(5-phospho-D-ribosyl)imidazole-4-carboxamide: step 1/1. The sequence is that of Bifunctional purine biosynthesis protein PurH from Oceanobacillus iheyensis (strain DSM 14371 / CIP 107618 / JCM 11309 / KCTC 3954 / HTE831).